We begin with the raw amino-acid sequence, 314 residues long: Oxaloacetate tautomerase FAHD2B, mitochondrial (314 aa).

Residues M1–L84 constitute a mitochondrion transit peptide. Positions 159, 161, and 190 each coordinate Mg(2+). The residue at position 203 (K203) is an N6-acetyllysine; alternate. At K203 the chain carries N6-succinyllysine; alternate. An N6-acetyllysine modification is found at K234.

Belongs to the FAH family. Mg(2+) serves as cofactor. The cofactor is Mn(2+).

The protein localises to the mitochondrion. The catalysed reaction is oxaloacetate = enol-oxaloacetate. In terms of biological role, tautomerase that converts enol-oxaloacetate, a strong inhibitor of succinate dehydrogenase, to the physiological keto form of oxaloacetate. It is thereby required to maximize aerobic respiration efficiency by preventing succinate dehydrogenase inhibition. This is Oxaloacetate tautomerase FAHD2B, mitochondrial from Bos taurus (Bovine).